Consider the following 82-residue polypeptide: Large ribosomal subunit protein bL31B (82 aa).

This sequence belongs to the bacterial ribosomal protein bL31 family. Type B subfamily. In terms of assembly, part of the 50S ribosomal subunit.

The protein is Large ribosomal subunit protein bL31B of Acinetobacter baylyi (strain ATCC 33305 / BD413 / ADP1).